The chain runs to 411 residues: Imidazolonepropionase (411 aa).

Residues histidine 78 and histidine 80 each contribute to the Fe(3+) site. Residues histidine 78 and histidine 80 each contribute to the Zn(2+) site. 4-imidazolone-5-propanoate-binding residues include arginine 87, tyrosine 150, and histidine 183. Residue tyrosine 150 coordinates N-formimidoyl-L-glutamate. Histidine 248 is a binding site for Fe(3+). Residue histidine 248 coordinates Zn(2+). Glutamine 251 serves as a coordination point for 4-imidazolone-5-propanoate. Position 322 (aspartate 322) interacts with Fe(3+). Aspartate 322 contacts Zn(2+). Residues asparagine 324 and glycine 326 each contribute to the N-formimidoyl-L-glutamate site. Threonine 327 provides a ligand contact to 4-imidazolone-5-propanoate.

Belongs to the metallo-dependent hydrolases superfamily. HutI family. It depends on Zn(2+) as a cofactor. Fe(3+) serves as cofactor.

Its subcellular location is the cytoplasm. It carries out the reaction 4-imidazolone-5-propanoate + H2O = N-formimidoyl-L-glutamate. It functions in the pathway amino-acid degradation; L-histidine degradation into L-glutamate; N-formimidoyl-L-glutamate from L-histidine: step 3/3. Functionally, catalyzes the hydrolytic cleavage of the carbon-nitrogen bond in imidazolone-5-propanoate to yield N-formimidoyl-L-glutamate. It is the third step in the universal histidine degradation pathway. The polypeptide is Imidazolonepropionase (Flavobacterium psychrophilum (strain ATCC 49511 / DSM 21280 / CIP 103535 / JIP02/86)).